The following is a 367-amino-acid chain: MATPNNLTPTNCSWWPISALESDAAKPAEAPDAPEAASPAHWPRESLVLYHWTQSFSSQKVRLVIAEKGLVCEERDVSLPQSEHKEPWFMRLNLGEEVPVIIHRDNIISDYDQIIDYVERTFTGEHVVALMPEVGSLQHARVLQYRELLDALPMDAYTHGCILHPELTTDSMIPKYATAEIRRHLANATTDLMKLDHEEEPQLSEPYLSKQKKLMAKILEHDDVSYLKKILGELAMVLDQIEAELEKRKLENEGQKCELWLCGCAFTLADVLLGATLHRLKFLGLSKKYWEDGSRPNLQSFFERVQRRFAFRKVLGDIHTTLLSAVIPNAFRLVKRKPPSFFGASFLMGSLGGMGYFAYWYLKKKYI.

The GST N-terminal domain maps to 45 to 126 (ESLVLYHWTQ…YVERTFTGEH (82 aa)). The GST C-terminal domain occupies 174 to 341 (PKYATAEIRR…RLVKRKPPSF (168 aa)).

This sequence belongs to the GST superfamily.

In Homo sapiens (Human), this protein is Ganglioside-induced differentiation-associated protein 1-like 1 (GDAP1L1).